Consider the following 165-residue polypeptide: Small ribosomal subunit protein uS5 (165 aa).

The 64-residue stretch at 10 to 73 folds into the S5 DRBM domain; the sequence is LNEKLIAVNR…EKARRNMVTV (64 aa).

This sequence belongs to the universal ribosomal protein uS5 family. As to quaternary structure, part of the 30S ribosomal subunit. Contacts proteins S4 and S8.

With S4 and S12 plays an important role in translational accuracy. Its function is as follows. Located at the back of the 30S subunit body where it stabilizes the conformation of the head with respect to the body. This chain is Small ribosomal subunit protein uS5, found in Photobacterium profundum (strain SS9).